A 351-amino-acid polypeptide reads, in one-letter code: uncharacterized protein (351 aa).

Residues aspartate 215, aspartate 226, histidine 290, glutamate 319, and glutamate 333 each coordinate Mn(2+).

Belongs to the peptidase M24B family. Mn(2+) is required as a cofactor.

This is an uncharacterized protein from Staphylococcus haemolyticus (strain JCSC1435).